The sequence spans 283 residues: Pantothenate synthetase (283 aa).

30 to 37 (MGYLHEGH) serves as a coordination point for ATP. Histidine 37 functions as the Proton donor in the catalytic mechanism. Glutamine 61 contributes to the (R)-pantoate binding site. Glutamine 61 contributes to the beta-alanine binding site. 147–150 (GRKD) is a binding site for ATP. Glutamine 153 contributes to the (R)-pantoate binding site. ATP contacts are provided by residues valine 176 and 184–187 (MSSR).

The protein belongs to the pantothenate synthetase family. Homodimer.

The protein localises to the cytoplasm. The catalysed reaction is (R)-pantoate + beta-alanine + ATP = (R)-pantothenate + AMP + diphosphate + H(+). It participates in cofactor biosynthesis; (R)-pantothenate biosynthesis; (R)-pantothenate from (R)-pantoate and beta-alanine: step 1/1. Its function is as follows. Catalyzes the condensation of pantoate with beta-alanine in an ATP-dependent reaction via a pantoyl-adenylate intermediate. The chain is Pantothenate synthetase from Syntrophotalea carbinolica (strain DSM 2380 / NBRC 103641 / GraBd1) (Pelobacter carbinolicus).